A 251-amino-acid polypeptide reads, in one-letter code: Prolactin-7C1 (251 aa).

The signal sequence occupies residues 1 to 30 (MLLSLTHPSFLAMLPMLLMSNLLQWEGVTS). An N-linked (GlcNAc...) asparagine glycan is attached at Asn57. Cystine bridges form between Cys101–Cys217 and Cys234–Cys242.

This sequence belongs to the somatotropin/prolactin family. As to expression, expressed exclusively in the placenta. Expressed in spongiotrophoblast cells and trophoblast giant cells of the junctional zone and in labyrinthine trophoblast.

It localises to the secreted. This chain is Prolactin-7C1 (Prl7c1), found in Mus musculus (Mouse).